Here is a 1291-residue protein sequence, read N- to C-terminus: Ethylene-insensitive protein 2.2 (1291 aa).

The next 6 helical transmembrane spans lie at 18–38 (ALPALGPGLLIAIGYVDPGKW), 48–68 (FGFDLVLPMLIFNFVAILCQY), 96–116 (FLGVQAALSVIALDLTMILGI), 128–148 (LSTCVFLAAVDAVLFPVFATL), 155–175 (SFLSTCIAGFLLLLYFFGVLI), and 195–215 (SAFALMSLLGASIMPHNFFLH). Residue Asn-227 is glycosylated (N-linked (GlcNAc...) asparagine). A run of 7 helical transmembrane segments spans residues 231–251 (GALCLNHFFAILCIFSGIYLV), 253–273 (YVLMNSAANVFYSTGLVLLTF), 288–308 (VALCVFSLILFFANHITALTW), 335–355 (IIAVVPALYCVWTSGVEGIYQ), 356–376 (LLIFTQVMVALLLPSSVIPLF), 393–413 (FLEFLALISFMGMLGIKIIFV), and 441–461 (VLLITACSSFCLMLWLAATPL). Positions 498-518 (TEEESIGGQEQLSGPGKSAES) are disordered. Asn-550 carries N-linked (GlcNAc...) asparagine glycosylation. The interval 614-662 (AEKEDDEGDSWEPEESSKGVPGSTSSLTSDGPGSFRSLSGKSDEGGNGA) is disordered. Residues 617–627 (EDDEGDSWEPE) show a composition bias toward acidic residues. Over residues 635-653 (GSTSSLTSDGPGSFRSLSG) the composition is skewed to polar residues. Residues Ser-647 and Ser-664 each carry the phosphoserine modification. Disordered regions lie at residues 742 to 768 (QIHSSLGDSPNHLRVPSNIDSSYGGQR) and 787 to 808 (GPSRSIADSSERRYSSVHTLPS). Polar residues predominate over residues 759 to 768 (NIDSSYGGQR). Thr-818 is modified (phosphothreonine). Residues 836–856 (GSSSLNGQMDSPAPISPSLGP) are disordered. Asn-891 carries N-linked (GlcNAc...) asparagine glycosylation. A Phosphoserine modification is found at Ser-923. N-linked (GlcNAc...) asparagine glycosylation occurs at Asn-1027. A disordered region spans residues 1210–1229 (HRSSPPVSNGMLPPASKPGR). A Nuclear localization signal motif is present at residues 1262–1269 (DVAFPKGK).

This sequence belongs to the NRAMP (TC 2.A.55) family.

It is found in the endoplasmic reticulum membrane. Its subcellular location is the nucleus. The protein resides in the cytoplasm. Central factor in signaling pathways regulated by ethylene (ET) and involved in various processes including development, plant defense, senescence, nucleotide sugar flux, and tropisms. Its function is as follows. Trafficking signal inducing ethylene response. The nuclear localization is both necessary and sufficient to activate EIN3-mediated transcription and ethylene responses. This chain is Ethylene-insensitive protein 2.2, found in Populus trichocarpa (Western balsam poplar).